Here is a 215-residue protein sequence, read N- to C-terminus: Small ribosomal subunit protein uS5 (215 aa).

Over residues 1–12 (MSGTQRRGGGAG) the composition is skewed to gly residues. Positions 1-31 (MSGTQRRGGGAGGERRGRDNRRGQNDRNRNQ) are disordered. The span at 13 to 31 (GERRGRDNRRGQNDRNRNQ) shows a compositional bias: basic and acidic residues. Positions 34–97 (YLERVVAINR…EEAKKHFFKV (64 aa)) constitute an S5 DRBM domain.

This sequence belongs to the universal ribosomal protein uS5 family. In terms of assembly, part of the 30S ribosomal subunit. Contacts proteins S4 and S8.

Its function is as follows. With S4 and S12 plays an important role in translational accuracy. Functionally, located at the back of the 30S subunit body where it stabilizes the conformation of the head with respect to the body. This Cutibacterium acnes (strain DSM 16379 / KPA171202) (Propionibacterium acnes) protein is Small ribosomal subunit protein uS5.